The chain runs to 170 residues: UPF0260 protein Rpal_2074 (170 aa).

It belongs to the UPF0260 family.

The chain is UPF0260 protein Rpal_2074 from Rhodopseudomonas palustris (strain TIE-1).